The chain runs to 360 residues: Photosystem II protein D1 (360 aa).

Transmembrane regions (helical) follow at residues 29–46, 118–133, and 142–156; these read YIGWFGVLMIPTLLTATS, HFLTGVACYIGREWEL, and WISVAFTAPVAAAAA. His118 contributes to the chlorophyll a binding site. Residue Tyr126 coordinates pheophytin a. Asp170 and Glu189 together coordinate [CaMn4O5] cluster. The helical transmembrane segment at 197 to 218 threads the bilayer; the sequence is FHQLGVAGVFGGSLFSAMHGSL. His198 provides a ligand contact to chlorophyll a. A quinone contacts are provided by residues His215 and 264-265; that span reads SF. His215 is a Fe cation binding site. His272 lines the Fe cation pocket. A helical transmembrane segment spans residues 274 to 288; sequence FLGLWPVVGIWLTAL. Residues His332, Glu333, Asp342, and Ala344 each coordinate [CaMn4O5] cluster. The propeptide occupies 345-360; sequence SGESLPVALTAPAVNG.

Belongs to the reaction center PufL/M/PsbA/D family. PSII is composed of 1 copy each of membrane proteins PsbA, PsbB, PsbC, PsbD, PsbE, PsbF, PsbH, PsbI, PsbJ, PsbK, PsbL, PsbM, PsbT, PsbX, PsbY, PsbZ, Psb30/Ycf12, at least 3 peripheral proteins of the oxygen-evolving complex and a large number of cofactors. It forms dimeric complexes. The D1/D2 heterodimer binds P680, chlorophylls that are the primary electron donor of PSII, and subsequent electron acceptors. It shares a non-heme iron and each subunit binds pheophytin, quinone, additional chlorophylls, carotenoids and lipids. D1 provides most of the ligands for the Mn4-Ca-O5 cluster of the oxygen-evolving complex (OEC). There is also a Cl(-1) ion associated with D1 and D2, which is required for oxygen evolution. The PSII complex binds additional chlorophylls, carotenoids and specific lipids. is required as a cofactor. Tyr-161 forms a radical intermediate that is referred to as redox-active TyrZ, YZ or Y-Z. In terms of processing, C-terminally processed by CTPA; processing is essential to allow assembly of the oxygen-evolving complex and thus photosynthetic growth.

Its subcellular location is the plastid. The protein resides in the chloroplast thylakoid membrane. It catalyses the reaction 2 a plastoquinone + 4 hnu + 2 H2O = 2 a plastoquinol + O2. Photosystem II (PSII) is a light-driven water:plastoquinone oxidoreductase that uses light energy to abstract electrons from H(2)O, generating O(2) and a proton gradient subsequently used for ATP formation. It consists of a core antenna complex that captures photons, and an electron transfer chain that converts photonic excitation into a charge separation. The D1/D2 (PsbA/PsbD) reaction center heterodimer binds P680, the primary electron donor of PSII as well as several subsequent electron acceptors. The protein is Photosystem II protein D1 of Porphyra purpurea (Red seaweed).